A 291-amino-acid polypeptide reads, in one-letter code: Diaminopimelate epimerase (291 aa).

Substrate contacts are provided by Asn17, Gln50, and Asn70. Residue Cys79 is the Proton donor of the active site. Substrate is bound by residues 80-81 (GN), Asn167, Asn200, and 218-219 (ER). The Proton acceptor role is filled by Cys227. 228–229 (GS) serves as a coordination point for substrate.

Belongs to the diaminopimelate epimerase family. Homodimer.

The protein localises to the cytoplasm. It carries out the reaction (2S,6S)-2,6-diaminopimelate = meso-2,6-diaminopimelate. It participates in amino-acid biosynthesis; L-lysine biosynthesis via DAP pathway; DL-2,6-diaminopimelate from LL-2,6-diaminopimelate: step 1/1. In terms of biological role, catalyzes the stereoinversion of LL-2,6-diaminopimelate (L,L-DAP) to meso-diaminopimelate (meso-DAP), a precursor of L-lysine and an essential component of the bacterial peptidoglycan. This is Diaminopimelate epimerase from Bradyrhizobium diazoefficiens (strain JCM 10833 / BCRC 13528 / IAM 13628 / NBRC 14792 / USDA 110).